Reading from the N-terminus, the 613-residue chain is ADP-ribosylation factor-binding protein GGA2 (613 aa).

Positions 33–163 (ATDPSMSEQD…MLKKQGIIKQ (131 aa)) constitute a VHS domain. The region spanning 188–315 (DEEKSKLLTR…GVLLYKQVME (128 aa)) is the GAT domain. Residues 316-483 (GRVTFGNRVT…VFVPLESVKP (168 aa)) form a unstructured hinge region. Disordered stretches follow at residues 389 to 414 (GQNCCEEKRNPSSSTLPGGGVQNPSA) and 435 to 466 (SQKSVPKEVPPGTKSSPGWSWEAGPLAPSPSS). The segment covering 399 to 414 (PSSSTLPGGGVQNPSA) has biased composition (polar residues). Residue serine 400 is modified to Phosphoserine. The GAE domain maps to 484 to 605 (SSLPPLIVYD…SEVGEVKDFP (122 aa)).

Belongs to the GGA protein family. In terms of assembly, monomer. Interacts with NECAP1, TSG101, UBC and AFTPH/aftiphilin. Interacts with CNST. Interacts with GGA1 and GGA3. Binds to clathrin and activated ARFs, such as ARF1, ARF5 and ARF6. Binds RABEP1 and RABGEF1. Interacts with the type-I membrane proteins LRP3, M6PR/CD-MPR, IGF2R/CI-MPR and BACE1. Interacts (via N-terminal VHS domain) with SORL1/sorLA and SORT1 (via C-terminal cytosolic domain). Binds the accessory proteins CCDC91, P200, SYNRG, EPN4 and NECAP2. Interacts with ADRA2B. Interacts (via VHS domain) with PIK4B; the interaction is important for PIK4B location at the Golgi apparatus membrane. In terms of processing, ubiquitinated. As to expression, ubiquitously expressed.

The protein localises to the golgi apparatus. Its subcellular location is the trans-Golgi network membrane. The protein resides in the endosome membrane. It localises to the early endosome membrane. Plays a role in protein sorting and trafficking between the trans-Golgi network (TGN) and endosomes. Mediates the ARF-dependent recruitment of clathrin to the TGN and binds ubiquitinated proteins and membrane cargo molecules with a cytosolic acidic cluster-dileucine (DXXLL) motif. Mediates export of the GPCR receptor ADRA2B to the cell surface. Regulates retrograde transport of phosphorylated form of BACE1 from endosomes to the trans-Golgi network. The sequence is that of ADP-ribosylation factor-binding protein GGA2 (GGA2) from Homo sapiens (Human).